Reading from the N-terminus, the 265-residue chain is MICOS complex subunit Mic27 (265 aa).

A mitochondrion-targeting transit peptide spans 1-27; the sequence is MAAFRMGKLTTIPAGLIYASINVRLAK. At 28–110 the chain is on the mitochondrial intermembrane side; that stretch reads EEEPKKQLVR…YVYLKNPPQD (83 aa). A helical membrane pass occupies residues 111–129; sequence FLPKMGVITASGLAGLLSA. Residues 130–137 lie on the Mitochondrial matrix side of the membrane; it reads RKGSRFKK. Residues 138–155 form a helical membrane-spanning segment; the sequence is IAYPLGLATLGATVCYPA. Residues 156-265 are Mitochondrial intermembrane-facing; it reads QSVIIAKITG…DDKDMYSTRS (110 aa). Disordered regions lie at residues 187–215 and 229–265; these read SENE…PDLK and VIKS…STRS. Phosphoserine is present on Ser-204. The span at 229–241 shows a compositional bias: polar residues; that stretch reads VIKSESTSGTTQF. The segment covering 246–265 has biased composition (basic and acidic residues); sequence KLMDHGQSHPDDKDMYSTRS.

The protein belongs to the apolipoprotein O/MICOS complex subunit Mic27 family. In terms of assembly, component of the mitochondrial contact site and cristae organizing system (MICOS) complex, composed of at least MICOS10/MIC10, CHCHD3/MIC19, CHCHD6/MIC25, APOOL/MIC27, IMMT/MIC60, APOO/MIC23/MIC26 and MICOS13/MIC13. This complex was also known under the names MINOS or MitOS complex. The MICOS complex associates with mitochondrial outer membrane proteins SAMM50, MTX1 and MTX2 (together described as components of the mitochondrial outer membrane sorting assembly machinery (SAM) complex) and DNAJC11, mitochondrial inner membrane protein TMEM11 and with HSPA9. The MICOS and SAM complexes together with DNAJC11 are part of a large protein complex spanning both membranes termed the mitochondrial intermembrane space bridging (MIB) complex. Interacts with MICOS10/MIC10, IMMT/MIC60 and APOO/MIC23/MIC26.

The protein resides in the mitochondrion inner membrane. It localises to the mitochondrion. Its function is as follows. Component of the MICOS complex, a large protein complex of the mitochondrial inner membrane that plays crucial roles in the maintenance of crista junctions, inner membrane architecture, and formation of contact sites to the outer membrane. Specifically binds to cardiolipin (in vitro) but not to the precursor lipid phosphatidylglycerol. Plays a crucial role in crista junction formation and mitochondrial function. This chain is MICOS complex subunit Mic27 (Apool), found in Mus musculus (Mouse).